The chain runs to 446 residues: Phosphoglucosamine mutase (446 aa).

Serine 101 functions as the Phosphoserine intermediate in the catalytic mechanism. Positions 101, 240, 242, and 244 each coordinate Mg(2+). Serine 101 carries the post-translational modification Phosphoserine.

Belongs to the phosphohexose mutase family. The cofactor is Mg(2+). In terms of processing, activated by phosphorylation.

The enzyme catalyses alpha-D-glucosamine 1-phosphate = D-glucosamine 6-phosphate. In terms of biological role, catalyzes the conversion of glucosamine-6-phosphate to glucosamine-1-phosphate. This is Phosphoglucosamine mutase from Pseudomonas putida (strain ATCC 47054 / DSM 6125 / CFBP 8728 / NCIMB 11950 / KT2440).